We begin with the raw amino-acid sequence, 606 residues long: MGVVIPEHKIQEVLERVDLVGLISRHVDLKKAGREWKACCPFHQEKTPSFYVVPEKRFYFCHGCRASGDAVSFVQRYLGKTFLDAVRDLARELGVDLEAEQDPSMRERQQIKEATDQAAEHFRAMLWQQDEGRSARAYIASRGVSDETAMAFGLGWAPLEWASLTERFQKLGMLEWAAKAGLVLKRNSGDGYYDFFRSRVMVPIRAPEGRPIAFGGRLIGADEGPKYLNSRESRLYNKSETLFGMDQSRDEIRKRKAAVLVEGYFDALGLHQVGVRHAVALCSTNLTAGHMQVLKRAEARELILLLDGDSAGLAAVERLSGPLLAAGATARVALLPQGDDPDTFARREGQEGVERLLEGAHPLTSHLFASLLPEGKAASFEEKMAALERLKPVVGQVPVGLVRATLFSAVAEHFGWRPADVEAALRSKVPLPKPAGGDAPPSSPNRPAPPLEKPPPALECFYVGAVLKEPRLMARDTFRVCDELSHMGLRMALAHATSGHGANDALFESSEAVKRGIESALRQLPSEPVPLEAAFLSICREIMVRRIDERLVYIKRATEQTPGAFDLTEETRQLLVERVELLALKKRVLEELKPASSGTKAPMQPV.

Residues 40–64 (CPFHQEKTPSFYVVPEKRFYFCHGC) form a CHC2-type zinc finger. Residues 256-349 (KAAVLVEGYF…DPDTFARREG (94 aa)) enclose the Toprim domain. Residues E262, D307, and D309 each coordinate Mg(2+). Residues 429 to 451 (VPLPKPAGGDAPPSSPNRPAPPL) are disordered. Residues 441–451 (PSSPNRPAPPL) show a composition bias toward pro residues.

The protein belongs to the DnaG primase family. In terms of assembly, monomer. Interacts with DnaB. The cofactor is Zn(2+). It depends on Mg(2+) as a cofactor.

It carries out the reaction ssDNA + n NTP = ssDNA/pppN(pN)n-1 hybrid + (n-1) diphosphate.. Its function is as follows. RNA polymerase that catalyzes the synthesis of short RNA molecules used as primers for DNA polymerase during DNA replication. In Myxococcus xanthus, this protein is DNA primase.